The following is a 299-amino-acid chain: Proline iminopeptidase (299 aa).

An AB hydrolase-1 domain is found at 29–279; the sequence is PLLLLHGGPG…SRHMAFIDEP (251 aa). Catalysis depends on serine 105, which acts as the Nucleophile. Aspartate 245 is a catalytic residue. The active-site Proton donor is the histidine 272.

It belongs to the peptidase S33 family.

The protein localises to the cell envelope. The catalysed reaction is Release of N-terminal proline from a peptide.. Its function is as follows. Releases the N-terminal proline from various substrates. The chain is Proline iminopeptidase from Levilactobacillus brevis (strain ATCC 367 / BCRC 12310 / CIP 105137 / JCM 1170 / LMG 11437 / NCIMB 947 / NCTC 947) (Lactobacillus brevis).